The primary structure comprises 66 residues: uncharacterized protein (66 aa).

Residues 1 to 20 (MTIINSISNFGSNNSFSNNN) are compositionally biased toward low complexity. Residues 1–47 (MTIINSISNFGSNNSFSNNNTVNQKSVIKRSKQMKNDNTSIGSSFKN) form a disordered region. Over residues 36–47 (NDNTSIGSSFKN) the composition is skewed to polar residues.

This is an uncharacterized protein from Dictyostelium discoideum (Social amoeba).